Here is an 893-residue protein sequence, read N- to C-terminus: POU domain protein 2, isoform B (893 aa).

A disordered region spans residues 586–668; sequence QMKQQQREDP…STPKPTSGLT (83 aa). Positions 602–617 are enriched in low complexity; sequence PLAKSPLRSPSLSPVP. Residues 623–646 show a composition bias toward polar residues; sequence QQRTPPNSMTANSLGMSSAVMTPN. Residues 647 to 665 show a composition bias toward low complexity; the sequence is TPSMQQQPQLQQSTPKPTS. The POU-specific domain occupies 681-755; sequence EETTDLEELE…LLQKWLEDAD (75 aa). A DNA-binding region (homeobox) is located at residues 786–845; the sequence is RRKKRTSIETTVRTTLEKAFLMNCKPTSEEISQLSERLNMDKEVIRVWFCNRRQKEKRIN.

This sequence belongs to the POU transcription factor family. Class-2 subfamily. In terms of tissue distribution, initial expression in cellular blastoderm stage, then in ectodermal stripes during germband extension. Broad expression in the neuroectoderm followed by limitation to discrete subsets of CNS cells, and expression in specific PNS neurons and support cells.

It localises to the nucleus. Its function is as follows. DNA-binding regulatory protein implicated in early development. Involved in neuronal cell fate decision. May act as an octamer-dependent activator of transcription. Could also play an early role in specific ectodermal cells, and a subsequent role in the embryonic nervous system. In Drosophila melanogaster (Fruit fly), this protein is POU domain protein 2, isoform B.